The primary structure comprises 386 residues: Chaperone protein DnaJ (386 aa).

Residues 6–71 (DYYEILGVDR…QKRARYDQFG (66 aa)) form the J domain. The segment at 144–226 (GTEKEVTVSR…CGGKGRVRKH (83 aa)) adopts a CR-type zinc-finger fold. Cys157, Cys160, Cys174, Cys177, Cys200, Cys203, Cys214, and Cys217 together coordinate Zn(2+). 4 CXXCXGXG motif repeats span residues 157–164 (CPTCSGSG), 174–181 (CRQCNGTG), 200–207 (CDVCHGEG), and 214–221 (CETCGGKG).

It belongs to the DnaJ family. As to quaternary structure, homodimer. Requires Zn(2+) as cofactor.

The protein resides in the cytoplasm. Participates actively in the response to hyperosmotic and heat shock by preventing the aggregation of stress-denatured proteins and by disaggregating proteins, also in an autonomous, DnaK-independent fashion. Unfolded proteins bind initially to DnaJ; upon interaction with the DnaJ-bound protein, DnaK hydrolyzes its bound ATP, resulting in the formation of a stable complex. GrpE releases ADP from DnaK; ATP binding to DnaK triggers the release of the substrate protein, thus completing the reaction cycle. Several rounds of ATP-dependent interactions between DnaJ, DnaK and GrpE are required for fully efficient folding. Also involved, together with DnaK and GrpE, in the DNA replication of plasmids through activation of initiation proteins. The sequence is that of Chaperone protein DnaJ from Acetivibrio thermocellus (strain ATCC 27405 / DSM 1237 / JCM 9322 / NBRC 103400 / NCIMB 10682 / NRRL B-4536 / VPI 7372) (Clostridium thermocellum).